Reading from the N-terminus, the 309-residue chain is Ecotin-like protein 3 (309 aa).

The interval 140–309 (QQELEAPAVS…KSGRDSRRNS (170 aa)) is disordered. The segment covering 156-167 (VRERQNNPEGHA) has biased composition (basic and acidic residues). A compositionally biased stretch (low complexity) spans 168-180 (HPVVVHSVESPEV). A compositionally biased stretch (basic and acidic residues) spans 181–190 (SGHKDGDQPM). Residues 196–205 (LKQSCSNSSR) are compositionally biased toward low complexity. Residues 209–221 (HSASGSSPKNTPL) are compositionally biased toward polar residues. A compositionally biased stretch (basic and acidic residues) spans 261–279 (SDSTSSRKDDQDSGYEKKV). A compositionally biased stretch (low complexity) spans 290–299 (SSPKRSASPK).

It belongs to the protease inhibitor I11 (ecotin) family.

This is Ecotin-like protein 3 from Leishmania braziliensis.